The following is a 540-amino-acid chain: Kinesin light chain (540 aa).

The stretch at 34-138 forms a coiled coil; sequence LETSVKGVKE…NKHLKYMASI (105 aa). 6 TPR repeats span residues 206–239, 248–281, 290–323, 332–365, 374–407, and 456–489; these read LRTL…LEKT, ATML…REKC, AATL…REKV, AKQL…YESK, AKTK…AHER, and TTTL…KKQH.

The protein belongs to the kinesin light chain family. In terms of assembly, oligomeric complex composed of two heavy chains and two light chains. Interacts with unc-83; the interaction is direct. Interacts with unc-33; the interaction regulates unc-33 neurite localization. Interacts with casy-1.

The protein localises to the cytoplasm. It is found in the cytoskeleton. It localises to the nucleus envelope. In terms of biological role, kinesin is a microtubule-associated force-producing protein that may play a role in organelle transport. The light chain may function in coupling of cargo to the heavy chain or in the modulation of its ATPase activity. Recruits unc-83 (within the unc-83-unc-84 LINC complex) to the nuclear envelope during nuclear migration to mediate the link between the nuclear envelope and the microtubule cytoskeleton in hypodermal precursor cells. This chain is Kinesin light chain, found in Caenorhabditis elegans.